A 447-amino-acid polypeptide reads, in one-letter code: METQQIKETIEMISEENLDIRTITMGISLLDCVTGDLQTTADKVYAKIMAKAANLVPVADAISDEYGIPIVNKRISVTPVSLLAGADQNLDFRPIAQAMDRAAKDLGVDLIGGYTALVQNGSTPAETALMKSLPEVLDTTERVCASVNIGSTRSGLNMDAVKLMGTVVKEVAMRKPQNAMKLVVFCNAVEDNPFMAGAFWGISEGDVAINTGVSGPGVVERAIAAKPAASFEEICETIKQTAFKVSRMGQFVGKVAADRLDVPFNIVDLSLAPTPAKGDSVAQILETMGLSHVGTPGTTAALALLNDAVKKGGIMAAERVGGLSGAFIPVSEDANMITAAAKGQISLEKLEAMTAVCSVGLDMVAVPGDTPDATISGMIADEAAIGMINNKTTAVRVIPVPGKQVGDIVEFGGIFGTAPIMAINDGDAQQFINRGGRIPAPIHSFKN.

This sequence belongs to the UPF0210 family. As to quaternary structure, homodimer.

The chain is UPF0210 protein LSEI_0897 from Lacticaseibacillus paracasei (strain ATCC 334 / BCRC 17002 / CCUG 31169 / CIP 107868 / KCTC 3260 / NRRL B-441) (Lactobacillus paracasei).